A 527-amino-acid polypeptide reads, in one-letter code: MINISDIPKNPGCYIYKNESGTVIYVGKAKNLKKRVSSYFNKKNHDPKTEKLVKSIYEMEFIVTDNEVEALILENTLIKKYSPKYNIDLKDSKNYAYIYISEENFPRIGISRNKSKKGKFYGPFTSAKERDYVLDVLKKTFKIRSCKNMHKRPCLRHHIKNCTAPCSGDITSKDYLNQIKKAEHILKGNIDSLIHELKNEMNEKSKNLQFEEALLIREEINAIERLKTRQNVKRDVKYNEDVISILEKSGKLHIMVFNVLKGTLFDRKYFEFDYTENFFEEFLIQYYSENDVPSEIIISELPKNLEEDNNEYSSDALLEYLSKKKGSKVAFKIPKQGEKKQLLDLAIKNLEIYVNGNEIKVQSLKNKLMLDKSPNIIECFDISHLSGTSTVGSVVQFRNGKPDKKNYRRFKIKTVSGIDDFKSISEVVFRRYSKLLEENLELPDLIIIDGGKGQLSSAFSELRKLKLKIPLISIAKREEEIYTPGIENPLPIKKNEKASLFIQEIRDEAHRFAINYNRLLRKKELIK.

The GIY-YIG domain occupies Lys9–Ile87. The 36-residue stretch at Asp191–Leu226 folds into the UVR domain.

The protein belongs to the UvrC family. As to quaternary structure, interacts with UvrB in an incision complex.

Its subcellular location is the cytoplasm. Functionally, the UvrABC repair system catalyzes the recognition and processing of DNA lesions. UvrC both incises the 5' and 3' sides of the lesion. The N-terminal half is responsible for the 3' incision and the C-terminal half is responsible for the 5' incision. In Methanococcus maripaludis (strain DSM 14266 / JCM 13030 / NBRC 101832 / S2 / LL), this protein is UvrABC system protein C.